We begin with the raw amino-acid sequence, 554 residues long: DDB1- and CUL4-associated factor 11 homolog (554 aa).

Residues 24–52 (QRMKNRNDSDTDFSDDDEETSGGCPKMTP) are disordered. Over residues 33–43 (DTDFSDDDEET) the composition is skewed to acidic residues. 5 WD repeats span residues 245-284 (QNQCAVFCVRFSDDSEQIVCGTSEYSIHVFDVEQRRRIRT), 288-328 (AHED…DGDV), 336-375 (GHRDGVTYVDSRQDERYLLSNSKDQTIKVWDLRKFSCQGG), 414-458 (GHSV…VSRR), and 461-500 (GHQAVVRECDWHPQENEIVSTSWDGVTTVWTWDERAEGVI). Positions 527–554 (PQRKLRKPISARNAKCPTTSSEPDDFQI) are disordered.

The protein belongs to the WD repeat LEC14B family.

In terms of biological role, involved in regulation of lifespan. Required for dopaminergic CEP neuron degeneration in response to Mn(2+). The chain is DDB1- and CUL4-associated factor 11 homolog (wdr-23) from Caenorhabditis briggsae.